A 549-amino-acid chain; its full sequence is Cytochrome bc1 complex cytochrome b subunit (549 aa).

A helical transmembrane segment spans residues 54-74; sequence VCLYSFIIIILTGVYLTLFFH. H118 and H132 together coordinate heme. 3 helical membrane passes run 122–142, 150–170, and 182–202; these read ALIF…TGAF, WLFG…GYSL, and FMEG…FFLF. 2 residues coordinate heme: H219 and H234. A run of 5 helical transmembrane segments spans residues 220–240, 269–289, 334–354, 389–409, and 417–437; these read ILLL…LVFY, AGGF…IATI, LVLG…AIAV, FGVA…NDLW, and INAI…VAFI.

The protein belongs to the cytochrome b family. The cytochrome bc1 complex is composed of a cytochrome b (QcrB), the Rieske iron-sulfur protein (QcrA) and a diheme cytochrome c (QcrC) subunit. It depends on heme as a cofactor.

It localises to the cell membrane. It catalyses the reaction a quinol + 2 Fe(III)-[cytochrome c](out) = a quinone + 2 Fe(II)-[cytochrome c](out) + 2 H(+)(out). Its function is as follows. Cytochrome b subunit of the cytochrome bc1 complex, an essential component of the respiratory electron transport chain required for ATP synthesis. The bc1 complex catalyzes the oxidation of ubiquinol and the reduction of cytochrome c in the respiratory chain. The bc1 complex operates through a Q-cycle mechanism that couples electron transfer to generation of the proton gradient that drives ATP synthesis. The cytochrome b subunit contains two ubiquinol reactive sites: the oxidation (QP) site and the reduction (QN) site. The chain is Cytochrome bc1 complex cytochrome b subunit (qcrB) from Streptomyces lividans.